Reading from the N-terminus, the 70-residue chain is DNA-directed RNA polymerase subunit omega (70 aa).

Belongs to the RNA polymerase subunit omega family. In terms of assembly, the RNAP catalytic core consists of 2 alpha, 1 beta, 1 beta' and 1 omega subunit. When a sigma factor is associated with the core the holoenzyme is formed, which can initiate transcription.

The catalysed reaction is RNA(n) + a ribonucleoside 5'-triphosphate = RNA(n+1) + diphosphate. Its function is as follows. Promotes RNA polymerase assembly. Latches the N- and C-terminal regions of the beta' subunit thereby facilitating its interaction with the beta and alpha subunits. This chain is DNA-directed RNA polymerase subunit omega, found in Clostridium perfringens (strain ATCC 13124 / DSM 756 / JCM 1290 / NCIMB 6125 / NCTC 8237 / Type A).